Reading from the N-terminus, the 874-residue chain is Alanine--tRNA ligase (874 aa).

4 residues coordinate Zn(2+): His-564, His-568, Cys-665, and His-669.

The protein belongs to the class-II aminoacyl-tRNA synthetase family. Zn(2+) is required as a cofactor.

The protein resides in the cytoplasm. The enzyme catalyses tRNA(Ala) + L-alanine + ATP = L-alanyl-tRNA(Ala) + AMP + diphosphate. Functionally, catalyzes the attachment of alanine to tRNA(Ala) in a two-step reaction: alanine is first activated by ATP to form Ala-AMP and then transferred to the acceptor end of tRNA(Ala). Also edits incorrectly charged Ser-tRNA(Ala) and Gly-tRNA(Ala) via its editing domain. The polypeptide is Alanine--tRNA ligase (Burkholderia vietnamiensis (strain G4 / LMG 22486) (Burkholderia cepacia (strain R1808))).